A 221-amino-acid chain; its full sequence is Uracil-DNA glycosylase (221 aa).

Asp65 acts as the Proton acceptor in catalysis.

This sequence belongs to the uracil-DNA glycosylase (UDG) superfamily. UNG family.

Its subcellular location is the cytoplasm. It carries out the reaction Hydrolyzes single-stranded DNA or mismatched double-stranded DNA and polynucleotides, releasing free uracil.. Functionally, excises uracil residues from the DNA which can arise as a result of misincorporation of dUMP residues by DNA polymerase or due to deamination of cytosine. This chain is Uracil-DNA glycosylase, found in Flavobacterium johnsoniae (strain ATCC 17061 / DSM 2064 / JCM 8514 / BCRC 14874 / CCUG 350202 / NBRC 14942 / NCIMB 11054 / UW101) (Cytophaga johnsonae).